The following is a 382-amino-acid chain: Galactokinase (382 aa).

Position 34–37 (34–37 (EHTD)) interacts with substrate. ATP is bound at residue 124-130 (GAGLSSS). Positions 130 and 162 each coordinate Mg(2+). Aspartate 174 (proton acceptor) is an active-site residue. Tyrosine 223 provides a ligand contact to substrate.

Belongs to the GHMP kinase family. GalK subfamily.

Its subcellular location is the cytoplasm. The catalysed reaction is alpha-D-galactose + ATP = alpha-D-galactose 1-phosphate + ADP + H(+). The protein operates within carbohydrate metabolism; galactose metabolism. Catalyzes the transfer of the gamma-phosphate of ATP to D-galactose to form alpha-D-galactose-1-phosphate (Gal-1-P). This is Galactokinase from Escherichia fergusonii (strain ATCC 35469 / DSM 13698 / CCUG 18766 / IAM 14443 / JCM 21226 / LMG 7866 / NBRC 102419 / NCTC 12128 / CDC 0568-73).